We begin with the raw amino-acid sequence, 340 residues long: HPr kinase/phosphorylase (340 aa).

Residues histidine 153 and lysine 174 contribute to the active site. 168 to 175 (GRSGIGKS) provides a ligand contact to ATP. Serine 175 is a binding site for Mg(2+). Aspartate 192 functions as the Proton acceptor; for phosphorylation activity. Proton donor; for dephosphorylation activity in the catalytic mechanism. The interval 216 to 225 (MEIRGLGIID) is important for the catalytic mechanism of both phosphorylation and dephosphorylation. Residue glutamate 217 coordinates Mg(2+). Residue arginine 258 is part of the active site. The tract at residues 279 to 284 (PIYPGK) is important for the catalytic mechanism of dephosphorylation.

Belongs to the HPrK/P family. As to quaternary structure, homohexamer. It depends on Mg(2+) as a cofactor.

The enzyme catalyses [HPr protein]-L-serine + ATP = [HPr protein]-O-phospho-L-serine + ADP + H(+). It catalyses the reaction [HPr protein]-O-phospho-L-serine + phosphate + H(+) = [HPr protein]-L-serine + diphosphate. Functionally, catalyzes the ATP- as well as the pyrophosphate-dependent phosphorylation of a specific serine residue in HPr, a phosphocarrier protein of the phosphoenolpyruvate-dependent sugar phosphotransferase system (PTS). HprK/P also catalyzes the pyrophosphate-producing, inorganic phosphate-dependent dephosphorylation (phosphorolysis) of seryl-phosphorylated HPr (P-Ser-HPr). The polypeptide is HPr kinase/phosphorylase (Chloroherpeton thalassium (strain ATCC 35110 / GB-78)).